The primary structure comprises 610 residues: Synaptotagmin-like protein 3 (610 aa).

The RabBD domain occupies 4 to 123 (EIDLSALKEL…IKTGEWFYEE (120 aa)). The segment at 219–239 (RQCVGQTERRSQSDTAVNVTT) is disordered. C2 domains are found at residues 306–428 (VTGE…TQSF) and 462–603 (RPRK…NLWT).

In terms of assembly, monomer. Binds NRXN1. Binds RAB27A that has been activated by GTP-binding via its N-terminus.

It is found in the endomembrane system. In terms of biological role, may act as Rab effector protein and play a role in vesicle trafficking. Binds phospholipids in the presence of calcium ions. The sequence is that of Synaptotagmin-like protein 3 (SYTL3) from Homo sapiens (Human).